An 853-amino-acid polypeptide reads, in one-letter code: DNA mismatch repair protein MutS (853 aa).

613–620 is an ATP binding site; it reads GPNMGGKS.

It belongs to the DNA mismatch repair MutS family.

Functionally, this protein is involved in the repair of mismatches in DNA. It is possible that it carries out the mismatch recognition step. This protein has a weak ATPase activity. In Vibrio campbellii (strain ATCC BAA-1116), this protein is DNA mismatch repair protein MutS.